Consider the following 91-residue polypeptide: Small ribosomal subunit protein bS20 (91 aa).

The disordered stretch occupies residues 72–91 (KNAASRQKSRLAKKLNGLSA).

This sequence belongs to the bacterial ribosomal protein bS20 family.

Its function is as follows. Binds directly to 16S ribosomal RNA. The polypeptide is Small ribosomal subunit protein bS20 (Halalkalibacterium halodurans (strain ATCC BAA-125 / DSM 18197 / FERM 7344 / JCM 9153 / C-125) (Bacillus halodurans)).